The following is a 368-amino-acid chain: ICEBs1 integrase (368 aa).

Residues 61–143 (VSFPTLISIY…SLSKIFDTAV (83 aa)) form the Core-binding (CB) domain. The Tyr recombinase domain maps to 164–362 (KKMKFWRPEE…YPNKQKEMAD (199 aa)). Active-site residues include Arg201, Lys239, His313, Arg316, and His339. Catalysis depends on Tyr349, which acts as the O-(3'-phospho-DNA)-tyrosine intermediate.

The protein belongs to the 'phage' integrase family.

In terms of biological role, putative integrase that is involved in the insertion of the integrative and conjugative element ICEBs1. Required for the excision of ICEBs1 from the donor cell genome and subsequent integration in the recipient cell genome. Appears not to be transferred through the mating pore. Integration of ICEBs1 involves an attachment site in the chromosome, attB, and a site in the circular form of ICEBs1, attICEBs1. The polypeptide is ICEBs1 integrase (int) (Bacillus subtilis (strain 168)).